The sequence spans 262 residues: Thioredoxin-like protein HCF164, chloroplastic (262 aa).

Residues 1-54 (MAVVASRCTGLLLPDLGASLAGFRRRRSTPASSLSFRPRRARRRLGSLSCIAPP) constitute a chloroplast transit peptide. The segment at 47–90 (SLSCIAPPDSAEPQTDEPAAKDDSTEDKAEASSASQDAGNPTFP) is disordered. The segment covering 64–76 (PAAKDDSTEDKAE) has biased composition (basic and acidic residues). Residues 78 to 89 (SSASQDAGNPTF) show a composition bias toward polar residues. Residues 78–230 (SSASQDAGNP…FLDNVVALAS (153 aa)) form the Thioredoxin domain. Catalysis depends on nucleophile residues Cys-151 and Cys-154. An intrachain disulfide couples Cys-151 to Cys-154.

Belongs to the thioredoxin family.

The protein localises to the plastid. Its subcellular location is the chloroplast. Its function is as follows. Probable thiol-disulfide oxidoreductase that may participate in various redox reactions in the chloroplast. The chain is Thioredoxin-like protein HCF164, chloroplastic from Oryza sativa subsp. japonica (Rice).